Reading from the N-terminus, the 195-residue chain is MSDQFVSQSGRTLSEFISRFQLQQPQPGSFSANSHHAAVLIPIVCRPEPTLLLTRRSDHLRKHAGQVAFPGGKADPQDSSLIETALREAEEEVAIPASAVHVLGQLAPLDSSSGFQVTPIVGLVPDNITFHGNEEEVAGLFEIPLYEALRLSRYYWLDIHRGGVNHRVYLSWYESQFIWGLTAAIIRRLAQQVNI.

Residues 34–165 (SHHAAVLIPI…WLDIHRGGVN (132 aa)) form the Nudix hydrolase domain. A Nudix box motif is present at residues 72–94 (GKADPQDSSLIETALREAEEEVA). Mg(2+)-binding residues include Glu88 and Glu92.

This sequence belongs to the Nudix hydrolase family. PCD1 subfamily. Mn(2+) serves as cofactor. Requires Mg(2+) as cofactor.

Functionally, probably mediates the hydrolysis of some nucleoside diphosphate derivatives. This is an uncharacterized protein from Yersinia enterocolitica serotype O:8 / biotype 1B (strain NCTC 13174 / 8081).